The primary structure comprises 119 residues: Large ribosomal subunit protein uL18 (119 aa).

It belongs to the universal ribosomal protein uL18 family. Part of the 50S ribosomal subunit; part of the 5S rRNA/L5/L18/L25 subcomplex. Contacts the 5S and 23S rRNAs.

This is one of the proteins that bind and probably mediate the attachment of the 5S RNA into the large ribosomal subunit, where it forms part of the central protuberance. In Anaeromyxobacter dehalogenans (strain 2CP-1 / ATCC BAA-258), this protein is Large ribosomal subunit protein uL18.